Reading from the N-terminus, the 354-residue chain is GTPase Obg (354 aa).

The 159-residue stretch at 1 to 159 folds into the Obg domain; that stretch reads MQFIDHAEIE…KQLRLELKLL (159 aa). The OBG-type G domain occupies 160–328; the sequence is AEVGIIGLPN…LLQEIWDVLD (169 aa). Residues 166–173, 191–195, 213–216, 280–283, and 309–311 each bind GTP; these read GLPNAGKS, FTTLI, DIPG, NKLD, and SAV. Mg(2+) contacts are provided by serine 173 and threonine 193.

It belongs to the TRAFAC class OBG-HflX-like GTPase superfamily. OBG GTPase family. Monomer. It depends on Mg(2+) as a cofactor.

The protein resides in the cytoplasm. An essential GTPase which binds GTP, GDP and possibly (p)ppGpp with moderate affinity, with high nucleotide exchange rates and a fairly low GTP hydrolysis rate. Plays a role in control of the cell cycle, stress response, ribosome biogenesis and in those bacteria that undergo differentiation, in morphogenesis control. The polypeptide is GTPase Obg (Picosynechococcus sp. (strain ATCC 27264 / PCC 7002 / PR-6) (Agmenellum quadruplicatum)).